The primary structure comprises 216 residues: 3-keto-L-gulonate-6-phosphate decarboxylase UlaD (216 aa).

Asp-11 is a substrate binding site. Mg(2+) is bound by residues Glu-33 and Asp-62. Substrate is bound at residue Arg-192.

The protein belongs to the HPS/KGPDC family. KGPDC subfamily. Homodimer. The cofactor is Mg(2+).

The enzyme catalyses 3-dehydro-L-gulonate 6-phosphate + H(+) = L-xylulose 5-phosphate + CO2. The protein operates within cofactor degradation; L-ascorbate degradation; D-xylulose 5-phosphate from L-ascorbate: step 2/4. Its function is as follows. Catalyzes the decarboxylation of 3-keto-L-gulonate-6-P into L-xylulose-5-P. Is involved in the anaerobic L-ascorbate utilization. This Escherichia fergusonii (strain ATCC 35469 / DSM 13698 / CCUG 18766 / IAM 14443 / JCM 21226 / LMG 7866 / NBRC 102419 / NCTC 12128 / CDC 0568-73) protein is 3-keto-L-gulonate-6-phosphate decarboxylase UlaD.